The primary structure comprises 132 residues: Dehydratase CTB10 (132 aa).

An EthD domain is found at 21 to 117 (PDQSEEDHHN…IPDHFNFADM (97 aa)).

The protein belongs to the tpcK family.

It functions in the pathway mycotoxin biosynthesis. In terms of biological role, dehydratase; part of the gene cluster that mediates the biosynthesis of cercosporin, a light-activated, non-host-selective toxin. The perylenequinone chromophore of cercosporin absorbs light energy to attain an electronically-activated triplet state and produces active oxygen species such as the hydroxyl radical, superoxide, hydrogen peroxide or singlet oxygen upon reaction with oxygen molecules. These reactive oxygen species cause damage to various cellular components including lipids, proteins and nucleic acids. The first step of cercosporin biosynthesis is performed by the polyketide synthase CTB1 which catalyzes the formation of nor-toralactone. The starter unit acyltransferase (SAT) domain of CTB1 initiates polyketide extension by the selective utilization of acetyl-CoA, which is elongated to the heptaketide in the beta-ketoacyl synthase (KS) domain by successive condensations with six malonyl units introduced by the malonyl acyltransferase (MAT) domain. The product template (PT) domain catalyzes C4-C9 and C2-C11 aldol cyclizations and dehydrations to a trihydroxynaphthalene, which is thought to be delivered to the thioesterase (TE) domain for product release. The bifunctional enzyme CTB3 then methylates nor-toralactone to toralactone before conducting an unusual oxidative aromatic ring opening. The O-methyltransferase CTB2 further methylates the nascent OH-6 of the CBT3 product, blocking further oxidation at this site before the reductase CTB6 reduces the 2-oxopropyl ketone at position C7, giving naphthalene. The FAD-dependent monooxygenase CTB5 in concert with the multicopper oxidase CTB12 are responsible for homodimerization of naphthalene with CTB7 installing the dioxepine moiety, finally producing cercosporin. The fasciclin domain-containing protein CTB11 might act with CTB5 and CTB12 whereas the roles of CTB9 and CTB10 have still to be elucidated. The sequence is that of Dehydratase CTB10 from Cercospora beticola (Sugarbeet leaf spot fungus).